The primary structure comprises 352 residues: tRNA-specific 2-thiouridylase MnmA (352 aa).

Residues 7-14 and leucine 33 contribute to the ATP site; that span reads GLSGGVDS. The active-site Nucleophile is cysteine 94. Cysteine 94 and cysteine 193 are joined by a disulfide. Glycine 119 contacts ATP. Residues 143–145 form an interaction with tRNA region; it reads KDQ. Cysteine 193 (cysteine persulfide intermediate) is an active-site residue. The interaction with tRNA stretch occupies residues 298 to 299; it reads RY.

The protein belongs to the MnmA/TRMU family.

It localises to the cytoplasm. It carries out the reaction S-sulfanyl-L-cysteinyl-[protein] + uridine(34) in tRNA + AH2 + ATP = 2-thiouridine(34) in tRNA + L-cysteinyl-[protein] + A + AMP + diphosphate + H(+). Catalyzes the 2-thiolation of uridine at the wobble position (U34) of tRNA, leading to the formation of s(2)U34. The protein is tRNA-specific 2-thiouridylase MnmA of Microcystis aeruginosa (strain NIES-843 / IAM M-2473).